The sequence spans 323 residues: MDAILEILDPYVFDYGYAYLFPQQTTQPSYGNSTGFAPSSASKNFDDEYSLNFGSSLPRDDIYRQSASILMIAGFGAAFIYVISAALSYYFVFDRRLEHHPRFLKNQIKQEIQSSFFAIPIIDLLTLPFFLGEVRGHSLLYTNIDEYGWSWLAISTILYMVFNDLGIYWIHRLEHHPSIYKYVHKPHHKWIVPTPWAAIAFHPVDGYVQSVPYHVFVYLCPMQKHLYMFLFVCVQIWTILIHDGDMITGHWLERFINSPAHHTLHHMYFTCNYGQYFTWADNYWGSHRAPMPELDPIHEAIRVMQEKGLADKDGNPIEKSKSE.

3 helical membrane passes run 67–87, 112–132, and 150–170; these read ASILMIAGFGAAFIYVISAAL, IQSSFFAIPIIDLLTLPFFLG, and SWLAISTILYMVFNDLGIYWI. The Fatty acid hydroxylase domain occupies 157–285; sequence ILYMVFNDLG…YFTWADNYWG (129 aa). Positions 171–175 match the Histidine box-1 motif; it reads HRLEH. Positions 184 to 188 match the Histidine box-2 motif; sequence HKPHH. The Histidine box-3 signature appears at 262–266; that stretch reads HTLHH.

The protein belongs to the sterol desaturase family.

It is found in the endoplasmic reticulum membrane. The catalysed reaction is episterol + 2 Fe(II)-[cytochrome b5] + O2 + 2 H(+) = 5-dehydroepisterol + 2 Fe(III)-[cytochrome b5] + 2 H2O. The protein operates within steroid metabolism; ergosterol biosynthesis. C-5 sterol desaturase; part of the third module of ergosterol biosynthesis pathway that includes the late steps of the pathway. ERG3A and ERG3BB catalyze the introduction of a C-5 double bond in the B ring to produce 5-dehydroepisterol. The third module or late pathway involves the ergosterol synthesis itself through consecutive reactions that mainly occur in the endoplasmic reticulum (ER) membrane. Firstly, the squalene synthase ERG9 catalyzes the condensation of 2 farnesyl pyrophosphate moieties to form squalene, which is the precursor of all steroids. Squalene synthase is crucial for balancing the incorporation of farnesyl diphosphate (FPP) into sterol and nonsterol isoprene synthesis. Secondly, squalene is converted into lanosterol by the consecutive action of the squalene epoxidase ERG1 and the lanosterol synthase ERG7. Then, the delta(24)-sterol C-methyltransferase ERG6 methylates lanosterol at C-24 to produce eburicol. Eburicol is the substrate of the sterol 14-alpha demethylase encoded by CYP51A, CYP51B and CYP51C, to yield 4,4,24-trimethyl ergosta-8,14,24(28)-trienol. CYP51B encodes the enzyme primarily responsible for sterol 14-alpha-demethylation, and plays an essential role in ascospore formation. CYP51A encodes an additional sterol 14-alpha-demethylase, induced on ergosterol depletion and responsible for the intrinsic variation in azole sensitivity. The third CYP51 isoform, CYP51C, does not encode a sterol 14-alpha-demethylase, but is required for full virulence on host wheat ears. The C-14 reductase ERG24 then reduces the C14=C15 double bond which leads to 4,4-dimethylfecosterol. A sequence of further demethylations at C-4, involving the C-4 demethylation complex containing the C-4 methylsterol oxidases ERG25, the sterol-4-alpha-carboxylate 3-dehydrogenase ERG26 and the 3-keto-steroid reductase ERG27, leads to the production of fecosterol via 4-methylfecosterol. ERG28 has a role as a scaffold to help anchor ERG25, ERG26 and ERG27 to the endoplasmic reticulum. The C-8 sterol isomerase ERG2 then catalyzes the reaction which results in unsaturation at C-7 in the B ring of sterols and thus converts fecosterol to episterol. The sterol-C5-desaturases ERG3A and ERG3BB then catalyze the introduction of a C-5 double bond in the B ring to produce 5-dehydroepisterol. The C-22 sterol desaturases ERG5A and ERG5B further convert 5-dehydroepisterol into ergosta-5,7,22,24(28)-tetraen-3beta-ol by forming the C-22(23) double bond in the sterol side chain. Finally, ergosta-5,7,22,24(28)-tetraen-3beta-ol is substrate of the C-24(28) sterol reductase ERG4 to produce ergosterol. The polypeptide is Delta(7)-sterol 5(6)-desaturase ERG3B (Gibberella zeae (strain ATCC MYA-4620 / CBS 123657 / FGSC 9075 / NRRL 31084 / PH-1) (Wheat head blight fungus)).